Here is a 193-residue protein sequence, read N- to C-terminus: Putative RING finger protein ORF38 (193 aa).

The RING-type zinc finger occupies 12–50; the sequence is CCICLDDEDVDRDNTIPCRHTVCRTCYVKPMLDQCPVCR.

In Magallana gigas (Pacific oyster), this protein is Putative RING finger protein ORF38.